The following is a 266-amino-acid chain: Putative carbamate hydrolase RutD (266 aa).

This sequence belongs to the AB hydrolase superfamily. Hydrolase RutD family.

It catalyses the reaction carbamate + 2 H(+) = NH4(+) + CO2. Involved in pyrimidine catabolism. May facilitate the hydrolysis of carbamate, a reaction that can also occur spontaneously. This is Putative carbamate hydrolase RutD from Escherichia coli O150:H5 (strain SE15).